Here is a 102-residue protein sequence, read N- to C-terminus: Large ribosomal subunit protein bL21 (102 aa).

Belongs to the bacterial ribosomal protein bL21 family. As to quaternary structure, part of the 50S ribosomal subunit. Contacts protein L20.

Its function is as follows. This protein binds to 23S rRNA in the presence of protein L20. This is Large ribosomal subunit protein bL21 from Exiguobacterium sp. (strain ATCC BAA-1283 / AT1b).